The sequence spans 419 residues: Carboxypeptidase A1 (419 aa).

Residues 1–16 form the signal peptide; sequence MWGLLIFSVLLGGVLA. Positions 17-110 are cleaved as a propeptide — activation peptide; that stretch reads KEDFVGHQVL…QEQMFASQGR (94 aa). Residues 121–414 form the Peptidase M14 domain; the sequence is TYHTLEEIYD…LALLTIMEHT (294 aa). 2 residues coordinate Zn(2+): His179 and Glu182. Residues 179 to 182, Arg237, and 254 to 255 each bind substrate; these read HSRE and NR. Cys248 and Cys271 are joined by a disulfide. His306 is a binding site for Zn(2+). Residues 307 to 308 and Tyr358 each bind substrate; that span reads SY. The Proton donor/acceptor role is filled by Glu380.

The protein belongs to the peptidase M14 family. In terms of assembly, monomer. May form a complex with proelastase 2. Zn(2+) serves as cofactor.

The protein resides in the secreted. It catalyses the reaction Release of a C-terminal amino acid, but little or no action with -Asp, -Glu, -Arg, -Lys or -Pro.. The catalysed reaction is leukotriene C4 + H2O = leukotriene F4 + glycine. Its function is as follows. Carboxypeptidase that catalyzes the release of a C-terminal amino acid, but has little or no action with -Asp, -Glu, -Arg, -Lys or -Pro. Catalyzes the conversion of leukotriene C4 to leukotriene F4 via the hydrolysis of an amide bond. The chain is Carboxypeptidase A1 (CPA1) from Sus scrofa (Pig).